We begin with the raw amino-acid sequence, 256 residues long: Anamorsin homolog (256 aa).

Positions 1-136 (MNSLSLELNK…DTNESSTINI (136 aa)) are N-terminal SAM-like domain. Residues 126–148 (WDTNESSTINIPSTSSNNPWASI) are disordered. Over residues 131–144 (SSTINIPSTSSNNP) the composition is skewed to low complexity. Residues 137-166 (PSTSSNNPWASIEGGDRINENDLVSENDKT) are linker. 4 residues coordinate [2Fe-2S] cluster: Cys-176, Cys-185, Cys-188, and Cys-190. Positions 176-190 (CEVGKTKKACKNCTC) are fe-S binding site A. [4Fe-4S] cluster-binding residues include Cys-217, Cys-220, Cys-228, and Cys-231. Short sequence motifs (cx2C motif) lie at residues 217 to 220 (CGNC) and 228 to 231 (CGGC). Positions 217 to 231 (CGNCSLGDAFRCGGC) are fe-S binding site B.

The protein belongs to the anamorsin family. In terms of assembly, monomer. The cofactor is [2Fe-2S] cluster. [4Fe-4S] cluster is required as a cofactor.

The protein localises to the cytoplasm. It is found in the mitochondrion intermembrane space. Its function is as follows. Component of the cytosolic iron-sulfur (Fe-S) protein assembly (CIA) machinery. Required for the maturation of extramitochondrial Fe-S proteins. Part of an electron transfer chain functioning in an early step of cytosolic Fe-S biogenesis, facilitating the de novo assembly of a [4Fe-4S] cluster on the cytosolic Fe-S scaffold complex. Electrons are transferred from NADPH via a FAD- and FMN-containing diflavin oxidoreductase. Together with the diflavin oxidoreductase, also required for the assembly of the diferric tyrosyl radical cofactor of ribonucleotide reductase (RNR), probably by providing electrons for reduction during radical cofactor maturation in the catalytic small subunit. The protein is Anamorsin homolog (rsc43) of Dictyostelium discoideum (Social amoeba).